Reading from the N-terminus, the 420-residue chain is MRKKAAGGAERRPLKPRTEAAAAAPAGRAMPSDHSRMKLRRDCSRPSLQWYTRAQNKMRRPNLLLKDILKCTLLLFGVWILFYILKLNHTTEECDMKRMPYMDPDRIKRAQQYAQQVLQKECRPQFAKRSMAQLFGSRYSLDLPPFVTKVPAESEAEYKYDPPFGFRKFSGKVQTLLELLPEHDFPEHLRAKSCKHCVVIGSGGILHGLEMGHALNQFDVVIRLNNAPVEGYSEHVGNKTTIRMTYPEGAPLSDLEYYSSDLFVTVLFKSVDFNWLQAMVKNETLPFWVRLFFWKQVAEKIPLQPKQFRILNPVIIKETAFDILQYSEPQSRFWGRDKNVPTIGVIAVVLATHLCDEVSLAGFSYALNQPRTPLHYFDNLCMAAMNFQTMHNVTTETNFLLKLVREGVVRDLSGGIHSEF.

Positions 1–39 are disordered; sequence MRKKAAGGAERRPLKPRTEAAAAAPAGRAMPSDHSRMKL. Over 1 to 67 the chain is Cytoplasmic; the sequence is MRKKAAGGAE…MRRPNLLLKD (67 aa). Positions 9 to 18 are enriched in basic and acidic residues; it reads AERRPLKPRT. Over residues 20-29 the composition is skewed to low complexity; it reads AAAAAPAGRA. Residues 68-88 form a helical membrane-spanning segment; that stretch reads ILKCTLLLFGVWILFYILKLN. The Lumenal portion of the chain corresponds to 89–420; that stretch reads HTTEECDMKR…DLSGGIHSEF (332 aa). Cys-197 and Cys-355 are oxidised to a cystine. Residue Asn-238 is glycosylated (N-linked (GlcNAc...) asparagine).

Belongs to the glycosyltransferase 29 family.

The protein resides in the golgi apparatus membrane. It carries out the reaction a beta-D-Gal-(1-&gt;4)-beta-D-Glc-(1&lt;-&gt;1)-Cer(d18:1(4E)) + CMP-N-acetyl-beta-neuraminate = a ganglioside GM3 (d18:1(4E)) + CMP + H(+). The catalysed reaction is ganglioside GA2 (d18:1(4E)/18:0) + CMP-N-acetyl-beta-neuraminate = ganglioside GM2 (d18:1(4E)/18:0) + CMP + H(+). It catalyses the reaction a beta-D-Gal-(1&lt;-&gt;1')-ceramide + CMP-N-acetyl-beta-neuraminate = N-acetyl-alpha-neuraminosyl-(2-&gt;3)-beta-D-galactosyl-(1&lt;-&gt;1')-ceramide + CMP + H(+). The enzyme catalyses ganglioside GA1 (d18:1(4E)/18:0) + CMP-N-acetyl-beta-neuraminate = ganglioside GM1 (d18:1(4E)/18:0) + CMP + H(+). In terms of biological role, transfers the sialyl group (N-acetyl-alpha-neuraminyl or NeuAc) from CMP-NeuAc to the non-reducing terminal galactose (Gal) of glycosphingolipids forming gangliosides (important molecules involved in the regulation of multiple cellular processes, including cell proliferation and differentiation, apoptosis, embryogenesis, development, and oncogenesis). Mainly involved in the biosynthesis of ganglioside GM3 but can also use different glycolipids as substrate acceptors such as D-galactosylceramide (GalCer), asialo-GM2 (GA2) and asialo-GM1 (GA1), although less preferentially than beta-D-Gal-(1-&gt;4)-beta-D-Glc-(1&lt;-&gt;1)-Cer (LacCer). In Bos taurus (Bovine), this protein is Lactosylceramide alpha-2,3-sialyltransferase (ST3GAL5).